An 873-amino-acid polypeptide reads, in one-letter code: Leucine--tRNA ligase (873 aa).

Positions 42-52 match the 'HIGH' region motif; the sequence is PYPSGKLHMGH. The interval 624 to 643 is disordered; the sequence is PVEIGGTEKMSKSKNNGVDP. A 'KMSKS' region motif is present at residues 632-636; the sequence is KMSKS. K635 contacts ATP.

It belongs to the class-I aminoacyl-tRNA synthetase family.

The protein resides in the cytoplasm. The catalysed reaction is tRNA(Leu) + L-leucine + ATP = L-leucyl-tRNA(Leu) + AMP + diphosphate. In Pseudomonas aeruginosa (strain LESB58), this protein is Leucine--tRNA ligase.